The chain runs to 398 residues: Glia-derived nexin (398 aa).

The signal sequence occupies residues 1 to 19 (MNWHLPLFLLASVTLPSIC). Residues Asn118 and Asn159 are each glycosylated (N-linked (GlcNAc...) asparagine).

The protein belongs to the serpin family.

The protein resides in the secreted. Its subcellular location is the extracellular space. In terms of biological role, serine protease inhibitor with activity toward thrombin, trypsin, and urokinase. Promotes neurite extension by inhibiting thrombin. Binds heparin. This chain is Glia-derived nexin (SERPINE2), found in Homo sapiens (Human).